Here is a 177-residue protein sequence, read N- to C-terminus: Transcription antitermination protein NusB (177 aa).

The disordered stretch occupies residues 1 to 35 (MTDSANPTPSARPPRQPRTGTTGTGARKAGSKSGR). Over residues 17-28 (PRTGTTGTGARK) the composition is skewed to low complexity.

The protein belongs to the NusB family.

In terms of biological role, involved in transcription antitermination. Required for transcription of ribosomal RNA (rRNA) genes. Binds specifically to the boxA antiterminator sequence of the ribosomal RNA (rrn) operons. The sequence is that of Transcription antitermination protein NusB from Acidovorax ebreus (strain TPSY) (Diaphorobacter sp. (strain TPSY)).